Here is a 130-residue protein sequence, read N- to C-terminus: Large ribosomal subunit protein bL17 (130 aa).

This sequence belongs to the bacterial ribosomal protein bL17 family. In terms of assembly, part of the 50S ribosomal subunit. Contacts protein L32.

This chain is Large ribosomal subunit protein bL17, found in Shewanella halifaxensis (strain HAW-EB4).